We begin with the raw amino-acid sequence, 188 residues long: Large ribosomal subunit protein uL5 (188 aa).

It belongs to the universal ribosomal protein uL5 family. Part of the 50S ribosomal subunit; part of the 5S rRNA/L5/L18/L25 subcomplex. Contacts the 5S rRNA and the P site tRNA. Forms a bridge to the 30S subunit in the 70S ribosome.

Its function is as follows. This is one of the proteins that bind and probably mediate the attachment of the 5S RNA into the large ribosomal subunit, where it forms part of the central protuberance. In the 70S ribosome it contacts protein S13 of the 30S subunit (bridge B1b), connecting the 2 subunits; this bridge is implicated in subunit movement. Contacts the P site tRNA; the 5S rRNA and some of its associated proteins might help stabilize positioning of ribosome-bound tRNAs. The polypeptide is Large ribosomal subunit protein uL5 (Aquifex aeolicus (strain VF5)).